Consider the following 169-residue polypeptide: Phosphopantetheine adenylyltransferase (169 aa).

T14 is a substrate binding site. ATP contacts are provided by residues 14–15 and H22; that span reads TF. Substrate is bound by residues K46, L78, and R92. Residues 93–95, E103, and 128–134 each bind ATP; these read GLR and HSFISSS.

The protein belongs to the bacterial CoaD family. In terms of assembly, homohexamer. It depends on Mg(2+) as a cofactor.

It is found in the cytoplasm. The catalysed reaction is (R)-4'-phosphopantetheine + ATP + H(+) = 3'-dephospho-CoA + diphosphate. It functions in the pathway cofactor biosynthesis; coenzyme A biosynthesis; CoA from (R)-pantothenate: step 4/5. In terms of biological role, reversibly transfers an adenylyl group from ATP to 4'-phosphopantetheine, yielding dephospho-CoA (dPCoA) and pyrophosphate. The chain is Phosphopantetheine adenylyltransferase from Stenotrophomonas maltophilia (strain K279a).